Consider the following 162-residue polypeptide: Caveolin-2 (162 aa).

At 1 to 86 (MGLETEKADV…FEISKYVMYK (86 aa)) the chain is on the cytoplasmic side. Tyr19 is subject to Phosphotyrosine; by SRC. A phosphoserine mark is found at Ser20 and Ser23. Residue Tyr27 is modified to Phosphotyrosine. Ser36 is subject to Phosphoserine. The segment at residues 87-107 (FLTVFLAIPLAFIAGILFATL) is an intramembrane region (helical). Residues 108-162 (SCLHIWILMPFVKTCLMVLPSVQTIWKSVTDVVIGPLCTSVGRSFSSVSMQLSHD) lie on the Cytoplasmic side of the membrane.

It belongs to the caveolin family. In terms of assembly, monomer or homodimer. Interacts with CAV1; the interaction forms a stable heterooligomeric complex that is required for targeting to lipid rafts and for caveolae formation. Tyrosine phosphorylated forms do not form heterooligomers with the Tyr-19-phosphorylated form existing as a monomer or dimer, and the Tyr-27-form as a monomer only. Interacts (tyrosine phosphorylated form) with the SH2 domain-containing proteins, RASA1, NCK1 and SRC. Interacts (tyrosine phosphorylated form) with INSR, the interaction (Tyr-27-phosphorylated form) is increased on insulin stimulation. Interacts (Tyr-19 phosphorylated form) with MAPK1 (phosphorylated form); the interaction, promoted by insulin, leads to nuclear location and MAPK1 activation. Interacts with STAT3; the interaction is increased on insulin-induced tyrosine phosphorylation leading to STAT activation. In terms of processing, phosphorylated on serine and tyrosine residues. CAV1 promotes phosphorylation on Ser-23 which then targets the complex to the plasma membrane, lipid rafts and caveolae. Phosphorylation on Ser-36 appears to modulate mitosis in endothelial cells. Phosphorylation on both Tyr-19 and Tyr-27 is required for insulin-induced 'Ser-727' phosphorylation of STAT3 and its activation. Phosphorylation on Tyr-19 is required for insulin-induced phosphorylation of MAPK1 and DNA binding of STAT3. Tyrosine phosphorylation is induced by both EGF and insulin.

It localises to the nucleus. The protein resides in the cytoplasm. It is found in the golgi apparatus membrane. The protein localises to the cell membrane. Its subcellular location is the membrane. It localises to the caveola. In terms of biological role, may act as a scaffolding protein within caveolar membranes. Interacts directly with G-protein alpha subunits and can functionally regulate their activity. Acts as an accessory protein in conjunction with CAV1 in targeting to lipid rafts and driving caveolae formation. The Ser-36 phosphorylated form has a role in modulating mitosis in endothelial cells. Positive regulator of cellular mitogenesis of the MAPK signaling pathway. Required for the insulin-stimulated nuclear translocation and activation of MAPK1 and STAT3, and the subsequent regulation of cell cycle progression. In Mus musculus (Mouse), this protein is Caveolin-2 (Cav2).